Reading from the N-terminus, the 461-residue chain is Glycogen synthase (461 aa).

ADP-alpha-D-glucose is bound at residue K15.

It belongs to the glycosyltransferase 1 family. Bacterial/plant glycogen synthase subfamily.

It carries out the reaction [(1-&gt;4)-alpha-D-glucosyl](n) + ADP-alpha-D-glucose = [(1-&gt;4)-alpha-D-glucosyl](n+1) + ADP + H(+). It functions in the pathway glycan biosynthesis; glycogen biosynthesis. In terms of biological role, synthesizes alpha-1,4-glucan chains using ADP-glucose. This is Glycogen synthase from Fusobacterium nucleatum subsp. nucleatum (strain ATCC 25586 / DSM 15643 / BCRC 10681 / CIP 101130 / JCM 8532 / KCTC 2640 / LMG 13131 / VPI 4355).